We begin with the raw amino-acid sequence, 552 residues long: Polypyrimidine tract-binding protein 3 (552 aa).

Residue methionine 1 is modified to N-acetylmethionine. Residue serine 17 is modified to Phosphoserine. Polar residues predominate over residues 32 to 43 (MNSSTPSTANGN). The disordered stretch occupies residues 32-55 (MNSSTPSTANGNDSKKFKRDRPPC). 3 RRM domains span residues 59–143 (RVLH…NLPN), 182–258 (LRII…FSKL), and 358–432 (SVLL…LSKH). Residue lysine 65 forms a Glycyl lysine isopeptide (Lys-Gly) (interchain with G-Cter in SUMO2) linkage. Tyrosine 127 is subject to Phosphotyrosine. Threonine 138 is modified (phosphothreonine). Lysine 216 is covalently cross-linked (Glycyl lysine isopeptide (Lys-Gly) (interchain with G-Cter in SUMO2)). N6-acetyllysine is present on lysine 423. Positions 435–455 (VQLPREGQEDQGLTKDFSNSP) are disordered. Serine 454 carries the phosphoserine modification. The region spanning 475 to 550 (ATLHLSNIPP…HHLRVSFSKS (76 aa)) is the RRM 4 domain.

Interacts with THBS4 (via the acidic amphipathic C-terminus). In terms of tissue distribution, expressed in several hematopoietic cell lines examined.

In terms of biological role, RNA-binding protein that mediates pre-mRNA alternative splicing regulation. Plays a role in the regulation of cell proliferation, differentiation and migration. Positive regulator of EPO-dependent erythropoiesis. Participates in cell differentiation regulation by repressing tissue-specific exons. Promotes FAS exon 6 skipping. Binds RNA, preferentially to both poly(G) and poly(U). This chain is Polypyrimidine tract-binding protein 3 (PTBP3), found in Homo sapiens (Human).